Reading from the N-terminus, the 571-residue chain is Glutamine--tRNA ligase (571 aa).

Residues 35-45 (PEPNGYLHIGH) carry the 'HIGH' region motif. ATP contacts are provided by residues 36–38 (EPN) and 42–48 (HIGHAKS). L-glutamine-binding residues include D68 and Y213. ATP is bound by residues T232, 262-263 (RL), and 270-272 (LSK). The 'KMSKS' region signature appears at 269–273 (ILSKR).

Belongs to the class-I aminoacyl-tRNA synthetase family. As to quaternary structure, monomer.

The protein localises to the cytoplasm. The catalysed reaction is tRNA(Gln) + L-glutamine + ATP = L-glutaminyl-tRNA(Gln) + AMP + diphosphate. This is Glutamine--tRNA ligase from Buchnera aphidicola subsp. Acyrthosiphon pisum (strain APS) (Acyrthosiphon pisum symbiotic bacterium).